Consider the following 626-residue polypeptide: Alpha terpineol synthase, chloroplastic (626 aa).

The transit peptide at 1 to 38 (MALLSVAPLASKSRLHKTLITSAHHLKPSPTTIPTLPV) directs the protein to the chloroplast. Mg(2+) contacts are provided by Asp-377, Asp-381, and Asp-529. The short motif at 377–381 (DDIYD) is the DDXXD motif element.

It belongs to the terpene synthase family. Tpsd subfamily. The cofactor is Mg(2+). Mn(2+) serves as cofactor.

The protein resides in the plastid. The protein localises to the chloroplast. The enzyme catalyses (2E)-geranyl diphosphate + H2O = (S)-alpha-terpineol + diphosphate. It carries out the reaction (2E)-geranyl diphosphate + H2O = (R)-alpha-terpineol + diphosphate. The catalysed reaction is (2E)-geranyl diphosphate + H2O = (2E)-geraniol + diphosphate. It catalyses the reaction (2E)-geranyl diphosphate = terpinolene + diphosphate. The enzyme catalyses (2E)-geranyl diphosphate = (4S)-limonene + diphosphate. Its pathway is terpene metabolism; oleoresin biosynthesis. The protein operates within secondary metabolite biosynthesis; terpenoid biosynthesis. Functionally, monoterpene synthase (TPS) involved in the biosynthesis of monoterpene natural products included in conifer oleoresin secretions and volatile emissions; these compounds contribute to biotic and abiotic stress defense against herbivores and pathogens. Catalyzes the conversion of (2E)-geranyl diphosphate (GPP) to (-)-alpha-terpineol, (+)-alpha-terpineol and terpin-4-ol, and, to a lower extent, to geraniol, terpinolene and (-)-limonene. In Pinus banksiana (Jack pine), this protein is Alpha terpineol synthase, chloroplastic.